The sequence spans 593 residues: Copine-5 (593 aa).

The C2 1 domain maps to 2 to 134 (EQPEDMASLS…SSGSRLEKPL (133 aa)). S19 is modified (phosphoserine). Ca(2+) is bound by residues D38, D44, D98, D100, S103, K108, and D110. S103 carries the post-translational modification Phosphoserine. S140 carries the post-translational modification Phosphoserine. Residues 161 to 284 (KCGTIILSAE…ARGQSQFNIY (124 aa)) form the C2 2 domain. 5 residues coordinate Ca(2+): D192, D198, D254, D256, and D262. One can recognise a VWFA domain in the interval 328-554 (NFTVAIDFTA…DVLAEIPDQL (227 aa)). The disordered stretch occupies residues 562–593 (GIRPRPPPAAPAQSPPQSPAHSPPGSPVHTHI). Residues 565–587 (PRPPPAAPAQSPPQSPAHSPPGS) are compositionally biased toward pro residues.

This sequence belongs to the copine family. Ca(2+) serves as cofactor. In terms of tissue distribution, expressed in the cerebra and cerebellum of newborn brain. Expressed in the eye, lung and muscles but weakly expressed in the adult brain (at protein level).

The protein resides in the perikaryon. Its subcellular location is the cell projection. Its function is as follows. Probable calcium-dependent phospholipid-binding protein that may play a role in calcium-mediated intracellular processes. Plays a role in dendrite formation by melanocytes. This chain is Copine-5, found in Mus musculus (Mouse).